A 201-amino-acid polypeptide reads, in one-letter code: LexA repressor (201 aa).

The segment at residues 28–48 (LREIAAQLGISGTLGVMKHLE) is a DNA-binding region (H-T-H motif). Active-site for autocatalytic cleavage activity residues include S120 and K157.

This sequence belongs to the peptidase S24 family. Homodimer.

The enzyme catalyses Hydrolysis of Ala-|-Gly bond in repressor LexA.. Represses a number of genes involved in the response to DNA damage (SOS response), including recA and lexA. In the presence of single-stranded DNA, RecA interacts with LexA causing an autocatalytic cleavage which disrupts the DNA-binding part of LexA, leading to derepression of the SOS regulon and eventually DNA repair. The protein is LexA repressor of Citrifermentans bemidjiense (strain ATCC BAA-1014 / DSM 16622 / JCM 12645 / Bem) (Geobacter bemidjiensis).